A 572-amino-acid polypeptide reads, in one-letter code: Transmembrane glycoprotein NMB (572 aa).

Residues 1–22 form the signal peptide; sequence MECLYYFLGFLLLAARLPLDAA. Topologically, residues 23–498 are extracellular; sequence KRFHDVLGNE…DPASPLRMAN (476 aa). The Cell attachment site motif lies at 64-66; it reads RGD. N-linked (GlcNAc...) asparagine glycans are attached at residues Asn93, Asn134, Asn146, Asn200, Asn249, Asn275, Asn296, Asn300, Asn306, and Asn312. Positions 240 to 327 constitute a PKD domain; it reads VTMFQKNDRN…AAPGPCPPPP (88 aa). Residues 320-362 form a disordered region; the sequence is PGPCPPPPPPPRPSKPTPSLATTLKSYDSNTPGPAGDNPLELS. Pro residues predominate over residues 321–335; that stretch reads GPCPPPPPPPRPSKP. Polar residues predominate over residues 338 to 351; sequence SLATTLKSYDSNTP. Asn459 and Asn467 each carry an N-linked (GlcNAc...) asparagine glycan. Residues 499-519 form a helical membrane-spanning segment; sequence SALISVGCLAIFVTVISLLVY. The Cytoplasmic portion of the chain corresponds to 520-572; that stretch reads KKHKEYNPIENSPGNVVRSKGLSVFLNRAKAVFFPGNQEKDPLLKNQEFKGVS. Ser542 carries the post-translational modification Phosphoserine.

It belongs to the PMEL/NMB family. Widely expressed, but very low expression, if any, in the brain. Expressed in the epidermis with higher levels in melanocytes compared with keratinocytes and Langerhans cells (at protein level). Expressed in peripheral blood, but not bone marrow mononuclear cells. Expressed in tissue macrophages, including liver Kuppfer cells and lung alveolar macrophages, in podocytes and in some cells of the ciliary body of the eye (at protein level). May be overexpressed in various cancers, including melanoma and glioblastoma multiforme.

The protein resides in the cell membrane. Its subcellular location is the melanosome membrane. The protein localises to the early endosome membrane. In terms of biological role, could be a melanogenic enzyme. The chain is Transmembrane glycoprotein NMB (GPNMB) from Homo sapiens (Human).